We begin with the raw amino-acid sequence, 439 residues long: Membrane sensor protein UhpC (439 aa).

Topologically, residues 1-25 (MLPFLKAPADAPLMTDKYEIDARYR) are cytoplasmic. A helical transmembrane segment spans residues 26–45 (YWRRHILLTIWLGYALFYFT). At 46-66 (RKSFNAAVPEILANGVLSRSD) the chain is on the periplasmic side. Residues 67 to 87 (IGLLATLFYITYGVSKFVSGI) form a helical membrane-spanning segment. Residues 88 to 95 (VSDRSNAR) are Cytoplasmic-facing. The chain crosses the membrane as a helical span at residues 96–118 (YFMGIGLIATGIINILFGFSTSL). Topologically, residues 119–121 (WAF) are periplasmic. Residues 122–144 (AVLWVLNAFFQGWGSPVCARLLT) traverse the membrane as a helical segment. Residues 145 to 162 (AWYSRTERGGWWALWNTA) lie on the Cytoplasmic side of the membrane. The helical transmembrane segment at 163–183 (HNVGGALIPIVMAAAALHYGW) threads the bilayer. A topological domain (periplasmic) is located at residue Arg184. Residues 185 to 205 (AGMMIAGCMAIVVGIFLCWRL) traverse the membrane as a helical segment. The Cytoplasmic segment spans residues 206 to 244 (RDRPQALGLPAVGEWRHDALEIAQQQEGAGLTRKEILTK). The chain crosses the membrane as a helical span at residues 245 to 265 (YVLLNPYIWLLSFCYVLVYVV). The Periplasmic portion of the chain corresponds to 266 to 289 (RAAINDWGNLYMSETLGVDLVTAN). Residues 290 to 310 (TAVTMFELGGFIGALVAGWGS) traverse the membrane as a helical segment. Residues 311-322 (DKLFNGNRGPMN) are Cytoplasmic-facing. Residues 323 to 343 (LIFAAGILLSVGSLWLMPFAS) traverse the membrane as a helical segment. Residues 344-349 (YVMQAT) are Periplasmic-facing. A helical transmembrane segment spans residues 350–370 (CFFTIGFFVFGPQMLIGMAAA). Residues 371–379 (ECSHKEAAG) are Cytoplasmic-facing. The chain crosses the membrane as a helical span at residues 380 to 400 (AATGFVGLFAYLGASLAGWPL). The Periplasmic portion of the chain corresponds to 401 to 410 (AKVLDTWHWS). Residues 411-431 (GFFVVISIAAGISALLLLPFL) form a helical membrane-spanning segment. Over 432 to 439 (NAQTPREA) the chain is Cytoplasmic.

The protein belongs to the major facilitator superfamily. Organophosphate:Pi antiporter (OPA) (TC 2.A.1.4) family.

It localises to the cell inner membrane. Functionally, part of the UhpABC signaling cascade that controls the expression of the hexose phosphate transporter UhpT. UhpC senses external glucose-6-phosphate and interacts with the histidine kinase UhpB, leading to the stimulation of the autokinase activity of UhpB. This chain is Membrane sensor protein UhpC, found in Escherichia coli (strain K12).